Reading from the N-terminus, the 351-residue chain is Penicillolysin (351 aa).

Positions 1–19 are cleaved as a signal peptide; that stretch reads MRFTTLSTAFLALAQNVYA. The propeptide occupies 20–174; that stretch reads FPIESDLSAL…TKALKPLDRR (155 aa). Asparagine 52 and asparagine 181 each carry an N-linked (GlcNAc...) asparagine glycan. Histidine 302 serves as a coordination point for Zn(2+). Residue glutamate 303 is part of the active site. 2 residues coordinate Zn(2+): histidine 306 and aspartate 317.

This sequence belongs to the peptidase M35 family. It depends on Zn(2+) as a cofactor.

The enzyme catalyses Preferential cleavage of bonds with hydrophobic residues in P1'. Also 3-Asn-|-Gln-4 and 8-Gly-|-Ser-9 bonds in insulin B chain.. The protein is Penicillolysin (plnC) of Penicillium citrinum.